The sequence spans 79 residues: Phosphoribosylformylglycinamidine synthase subunit PurS (79 aa).

It belongs to the PurS family. Homodimer. Part of the FGAM synthase complex composed of 1 PurL, 1 PurQ and 2 PurS subunits.

The protein resides in the cytoplasm. It catalyses the reaction N(2)-formyl-N(1)-(5-phospho-beta-D-ribosyl)glycinamide + L-glutamine + ATP + H2O = 2-formamido-N(1)-(5-O-phospho-beta-D-ribosyl)acetamidine + L-glutamate + ADP + phosphate + H(+). The protein operates within purine metabolism; IMP biosynthesis via de novo pathway; 5-amino-1-(5-phospho-D-ribosyl)imidazole from N(2)-formyl-N(1)-(5-phospho-D-ribosyl)glycinamide: step 1/2. Part of the phosphoribosylformylglycinamidine synthase complex involved in the purines biosynthetic pathway. Catalyzes the ATP-dependent conversion of formylglycinamide ribonucleotide (FGAR) and glutamine to yield formylglycinamidine ribonucleotide (FGAM) and glutamate. The FGAM synthase complex is composed of three subunits. PurQ produces an ammonia molecule by converting glutamine to glutamate. PurL transfers the ammonia molecule to FGAR to form FGAM in an ATP-dependent manner. PurS interacts with PurQ and PurL and is thought to assist in the transfer of the ammonia molecule from PurQ to PurL. The protein is Phosphoribosylformylglycinamidine synthase subunit PurS of Mycobacterium leprae (strain TN).